The sequence spans 172 residues: uncharacterized protein (172 aa).

The next 3 helical transmembrane spans lie at 16-36, 68-88, and 89-109; these read IMIV…AYLI, SFLI…AGEL, and VISH…YIII.

It is found in the cell membrane. This is an uncharacterized protein from Methanocaldococcus jannaschii (strain ATCC 43067 / DSM 2661 / JAL-1 / JCM 10045 / NBRC 100440) (Methanococcus jannaschii).